The primary structure comprises 542 residues: Nuclear hormone receptor family member nhr-35 (542 aa).

Positions 74 to 149 form a DNA-binding region, nuclear receptor; it reads NSICHICSDV…SGMRDDQVQS (76 aa). 2 consecutive NR C4-type zinc fingers follow at residues 77–97 and 113–137; these read CHIC…CNGC and CRFE…FMKC. In terms of domain architecture, NR LBD spans 186–438; that stretch reads EYDQLLESLL…VLMEELILAE (253 aa). The interval 445 to 487 is disordered; it reads RQDQTPCSIMNDTPSGSQDMCSPCPEDLLRTSTSSNSPTNSSL. Residues 448 to 464 show a composition bias toward polar residues; it reads QTPCSIMNDTPSGSQDM. Positions 475 to 487 are enriched in low complexity; that stretch reads TSTSSNSPTNSSL.

Belongs to the nuclear hormone receptor family.

It is found in the nucleus. Functionally, orphan nuclear receptor. The chain is Nuclear hormone receptor family member nhr-35 (nhr-35) from Caenorhabditis elegans.